We begin with the raw amino-acid sequence, 270 residues long: NAD kinase (270 aa).

The Proton acceptor role is filled by aspartate 63. NAD(+) contacts are provided by residues 63–64 (DG), 131–132 (NE), lysine 142, arginine 159, aspartate 161, 172–177 (TAYAMS), alanine 196, and glutamine 230.

This sequence belongs to the NAD kinase family. Requires a divalent metal cation as cofactor.

It localises to the cytoplasm. It carries out the reaction NAD(+) + ATP = ADP + NADP(+) + H(+). Involved in the regulation of the intracellular balance of NAD and NADP, and is a key enzyme in the biosynthesis of NADP. Catalyzes specifically the phosphorylation on 2'-hydroxyl of the adenosine moiety of NAD to yield NADP. The chain is NAD kinase from Methanoculleus marisnigri (strain ATCC 35101 / DSM 1498 / JR1).